Consider the following 441-residue polypeptide: POC1 centriolar protein homolog A (441 aa).

WD repeat units lie at residues 16-55 (GHRDTVTAVDFNANTKQLASGSMDSCLMVWNMKTQMRAYR), 58-97 (GHKDAILSVDFSPSGHLIASASRDKTVRLWVPSVKGESTA), 100-139 (AHTGTVRSVSFSGDGQSLVTASDDKTIKVWTVHRQKFLFS), 142-181 (QHINWVRCAKFSPDGRLIVSASDDKTIKLWDKTSRECIQS), 184-223 (EHGGFVNFVDFHPSGTCIAAAATDNTVKVWDIRMNKLIQH), 226-265 (VHSGVVNSLSFHPSGNYLITASNDSTLKVLDLLEGRLLYT), and 268-307 (GHQGPVTCVKFSREGDFFASGGSDEQVMVWKTNFDAGSYP). A disordered region spans residues 347–376 (DLEPHITEMSVKDRSSPLSYTSRSVDQHHP). Positions 348 to 361 (LEPHITEMSVKDRS) are enriched in basic and acidic residues. A coiled-coil region spans residues 400–427 (LTRTVGILEQRLSLTEDKLKECIEQQQA).

Belongs to the WD repeat POC1 family. In terms of assembly, interacts with pat.

The protein localises to the cytoplasm. It is found in the cytoskeleton. Its function is as follows. May play an important role in centriole assembly and/or stability and ciliogenesis. The sequence is that of POC1 centriolar protein homolog A (poc1a) from Xenopus laevis (African clawed frog).